The chain runs to 250 residues: Flavin-dependent thymidylate synthase (250 aa).

A ThyX domain is found at 7–233 (LRVQLIAKTE…PAVFADFEVT (227 aa)). DUMP-binding positions include 92–95 (ELIR), 103–107 (QLSQR), and Arg172. FAD-binding positions include 95–97 (RHR) and Gln103. The ThyX motif motif lies at 95-105 (RHRHFSYSQLS). FAD is bound by residues 188–190 (NYR) and His194. Arg199 is a dUMP binding site. Arg199 acts as the Involved in ionization of N3 of dUMP, leading to its activation in catalysis.

It belongs to the thymidylate synthase ThyX family. Homotetramer. It depends on FAD as a cofactor.

It carries out the reaction dUMP + (6R)-5,10-methylene-5,6,7,8-tetrahydrofolate + NADPH + H(+) = dTMP + (6S)-5,6,7,8-tetrahydrofolate + NADP(+). It functions in the pathway pyrimidine metabolism; dTTP biosynthesis. Its function is as follows. Catalyzes the reductive methylation of 2'-deoxyuridine-5'-monophosphate (dUMP) to 2'-deoxythymidine-5'-monophosphate (dTMP) while utilizing 5,10-methylenetetrahydrofolate (mTHF) as the methyl donor, and NADPH and FADH(2) as the reductant. In Mycobacterium marinum (strain ATCC BAA-535 / M), this protein is Flavin-dependent thymidylate synthase.